The primary structure comprises 1240 residues: ATP-dependent helicase/nuclease subunit A (1240 aa).

Residues 12 to 485 enclose the UvrD-like helicase ATP-binding domain; sequence SQWTDDQWKA…IDLAKNFRSR (474 aa). 33 to 40 contacts ATP; the sequence is AAAGSGKT. Residues 497-804 form the UvrD-like helicase C-terminal domain; that stretch reads KQIMGEEVGE…RIMTIHKSKG (308 aa).

The protein belongs to the helicase family. AddA subfamily. In terms of assembly, heterodimer of AddA and AddB/RexB. Requires Mg(2+) as cofactor.

The catalysed reaction is Couples ATP hydrolysis with the unwinding of duplex DNA by translocating in the 3'-5' direction.. The enzyme catalyses ATP + H2O = ADP + phosphate + H(+). In terms of biological role, the heterodimer acts as both an ATP-dependent DNA helicase and an ATP-dependent, dual-direction single-stranded exonuclease. Recognizes the chi site generating a DNA molecule suitable for the initiation of homologous recombination. The AddA nuclease domain is required for chi fragment generation; this subunit has the helicase and 3' -&gt; 5' nuclease activities. In Bacillus cereus (strain AH820), this protein is ATP-dependent helicase/nuclease subunit A.